The primary structure comprises 524 residues: Lysophospholipid acyltransferase LPCAT4 (524 aa).

The next 2 membrane-spanning stretches (helical) occupy residues 40–62 and 87–107; these read CLLGALLAPIRVLLAFIVLFLLW and TVCHNGVLGLSRLLFFLLGFL. Residues 129 to 134 carry the HXXXXD motif motif; that stretch reads HSTFFD. A glycan (N-linked (GlcNAc...) asparagine) is linked at Asn-152. Residues 489–524 are disordered; that stretch reads PPHTSRGTSQTPNASSPGNPTALANGTVQAPKQKGD. Residues 493-518 are compositionally biased toward polar residues; the sequence is SRGTSQTPNASSPGNPTALANGTVQA.

Belongs to the 1-acyl-sn-glycerol-3-phosphate acyltransferase family. In terms of tissue distribution, widely expressed with predominant level in brain.

The protein resides in the endoplasmic reticulum membrane. It catalyses the reaction a 1-acyl-sn-glycero-3-phosphoethanolamine + an acyl-CoA = a 1,2-diacyl-sn-glycero-3-phosphoethanolamine + CoA. The catalysed reaction is a 1-O-(1Z-alkenyl)-sn-glycero-3-phosphoethanolamine + an acyl-CoA = a 1-O-(1Z-alkenyl)-2-acyl-sn-glycero-3-phosphoethanolamine + CoA. It carries out the reaction a 1-acyl-sn-glycero-3-phosphocholine + an acyl-CoA = a 1,2-diacyl-sn-glycero-3-phosphocholine + CoA. The enzyme catalyses a 1-O-alkyl-sn-glycero-3-phosphocholine + acetyl-CoA = a 1-O-alkyl-2-acetyl-sn-glycero-3-phosphocholine + CoA. It catalyses the reaction a 1-acyl-sn-glycero-3-phospho-L-serine + an acyl-CoA = a 1,2-diacyl-sn-glycero-3-phospho-L-serine + CoA. The catalysed reaction is octanoyl-CoA + a 1-acyl-sn-glycero-3-phosphoethanolamine = 1-acyl-2-octanoyl-sn-glycero-3-phosphoethanolamine + CoA. It carries out the reaction a 1-acyl-sn-glycero-3-phosphoethanolamine + hexadecanoyl-CoA = 1-acyl-2-hexadecanoyl-sn-glycero-3-phosphoethanolamine + CoA. The enzyme catalyses a 1-acyl-sn-glycero-3-phosphoethanolamine + octadecanoyl-CoA = 1-acyl-2-octadecanoyl-sn-glycero-3-phosphoethanolamine + CoA. It catalyses the reaction a 1-acyl-sn-glycero-3-phosphoethanolamine + (9Z)-octadecenoyl-CoA = 1-acyl-2-(9Z)-octadecenoyl-sn-glycero-3-phosphoethanolamine + CoA. The catalysed reaction is a 1-acyl-sn-glycero-3-phosphoethanolamine + (5Z,8Z,11Z,14Z)-eicosatetraenoyl-CoA = 1-acyl-2-(5Z,8Z,11Z,14Z)-eicosatetraenoyl-sn-glycero-3-phosphoethanolamine + CoA. It carries out the reaction a 1-O-(1Z-alkenyl)-sn-glycero-3-phosphoethanolamine + octanoyl-CoA = 1-O-(1Z)-alkenyl-2-octanoyl-sn-glycero-3-phosphoethanolamine + CoA. The enzyme catalyses a 1-O-(1Z-alkenyl)-sn-glycero-3-phosphoethanolamine + hexadecanoyl-CoA = 1-O-(1Z)-alkenyl-2-hexadecanoyl-sn-glycero-3-phosphoethanolamine + CoA. It catalyses the reaction a 1-O-(1Z-alkenyl)-sn-glycero-3-phosphoethanolamine + octadecanoyl-CoA = 1-O-(1Z)-alkenyl-2-octadecanoyl-sn-glycero-3-phosphoethanolamine + CoA. The catalysed reaction is a 1-O-(1Z-alkenyl)-sn-glycero-3-phosphoethanolamine + (9Z)-octadecenoyl-CoA = 1-O-(1Z)-alkenyl-2-(9Z)-octadecenoyl-sn-glycero-3-phosphoethanolamine + CoA. It carries out the reaction a 1-O-(1Z-alkenyl)-sn-glycero-3-phosphoethanolamine + (5Z,8Z,11Z,14Z)-eicosatetraenoyl-CoA = 1-O-(1Z)-alkenyl-2-(5Z,8Z,11Z,14Z)-eicosatetraenoyl-sn-glycero-3-phosphoethanolamine + CoA. The enzyme catalyses a 1-acyl-sn-glycero-3-phosphocholine + hexadecanoyl-CoA = 1-acyl-2-hexadecanoyl-sn-glycero-3-phosphocholine + CoA. It catalyses the reaction a 1-acyl-sn-glycero-3-phosphocholine + (9Z)-octadecenoyl-CoA = a 1-acyl-2-(9Z)-octadecenoyl-sn-glycero-3-phosphocholine + CoA. The catalysed reaction is 1-O-hexadecyl-sn-glycero-3-phosphocholine + (9Z)-octadecenoyl-CoA = 1-O-hexadecyl-2-(9Z)-octadecenoyl-sn-glycero-3-phosphocholine + CoA. It carries out the reaction 1-O-hexadecyl-sn-glycero-3-phosphocholine + (5Z,8Z,11Z,14Z)-eicosatetraenoyl-CoA = 1-O-hexadecyl-2-(5Z,8Z,11Z,14Z)-eicosatetraenoyl-sn-glycero-3-phosphocholine + CoA. The enzyme catalyses 1-hexadecanoyl-sn-glycero-3-phospho-L-serine + (9Z)-octadecenoyl-CoA = 1-hexadecanoyl-2-(9Z-octadecenoyl)-sn-glycero-3-phospho-L-serine + CoA. It catalyses the reaction 1-octadecanoyl-sn-glycero-3-phospho-(1'-sn-glycerol) + (9Z)-octadecenoyl-CoA = 1-octadecanoyl-2-(9Z-octadecenoyl)-sn-glycero-3-phospho-(1'-sn-glycerol) + CoA. The catalysed reaction is 1-octadecanoyl-sn-glycero-3-phospho-(1'-sn-glycerol) + (5Z,8Z,11Z,14Z)-eicosatetraenoyl-CoA = 1-octadecanoyl-2-(5Z,8Z,11Z,14Z-eicosatetraenoyl)-sn-glycero-3-phospho-(1'-sn-glycerol) + CoA. It functions in the pathway lipid metabolism; phospholipid metabolism. Displays acyl-CoA-dependent lysophospholipid acyltransferase activity with a subset of lysophospholipids as substrates; converts lysophosphatidylethanolamine to phosphatidylethanolamine, lysophosphatidylcholine to phosphatidycholine, 1-alkenyl-lysophatidylethanolamine to 1-alkenyl-phosphatidylethanolamine, lysophosphatidylglycerol and alkyl-lysophosphatidylcholine to phosphatidylglycerol and alkyl-phosphatidylcholine, respectively. In contrast, has no lysophosphatidylinositol, glycerol-3-phosphate, diacylglycerol or lysophosphatidic acid acyltransferase activity. Prefers long chain acyl-CoAs (C16, C18) as acyl donors. The polypeptide is Lysophospholipid acyltransferase LPCAT4 (LPCAT4) (Homo sapiens (Human)).